Reading from the N-terminus, the 328-residue chain is GMP reductase (328 aa).

Cys174 (thioimidate intermediate) is an active-site residue. Residue 203-226 (IIADGGIRTHGDIAKSIRFGASMV) coordinates NADP(+).

Belongs to the IMPDH/GMPR family. GuaC type 2 subfamily.

The catalysed reaction is IMP + NH4(+) + NADP(+) = GMP + NADPH + 2 H(+). Functionally, catalyzes the irreversible NADPH-dependent deamination of GMP to IMP. It functions in the conversion of nucleobase, nucleoside and nucleotide derivatives of G to A nucleotides, and in maintaining the intracellular balance of A and G nucleotides. The chain is GMP reductase from Staphylococcus saprophyticus subsp. saprophyticus (strain ATCC 15305 / DSM 20229 / NCIMB 8711 / NCTC 7292 / S-41).